The following is a 392-amino-acid chain: MDLFEYQAKELFAAHGVPITPGEVAENPDQAADIARRLGGRVVVKAQVKTGGRGKAGGVKLADDADAAAAAAEAILGMEIRGHRVHRVLVTTAVDIAHEYYVAFLVDRSRRSFLAMGSAEGGVEIEQVAAENPQAIVRVPIDATEGVDATLAARIADDIGFPAAVRDEAVRILRGLWEAFQAEDASLVEVNPLVRTLDDRLIALDGKVTLDDNADFRHPDRARFADPSAADPLEAKAKAAGLHYVKLDGEVGVIGNGAGLVMSTLDVVAYAGETYGGIRPANFLDIGGGASAEVMAAGLTVVLADPAVRAVLVNVFGGITACDAVARGIVAAFENLIAAGERIDVPLVVRLDGNRAAEGRAILAAAQLPRVEQVETMDDAARRVAELAAAAR.

The region spanning 9 to 236 (KELFAAHGVP…PSAADPLEAK (228 aa)) is the ATP-grasp domain. Residues lysine 45, 52-54 (GRG), valine 94, and glutamate 99 contribute to the ATP site. The Mg(2+) site is built by asparagine 191 and aspartate 205. Substrate-binding positions include asparagine 256 and 318–320 (GIT).

Belongs to the succinate/malate CoA ligase beta subunit family. As to quaternary structure, heterotetramer of two alpha and two beta subunits. Requires Mg(2+) as cofactor.

It catalyses the reaction succinate + ATP + CoA = succinyl-CoA + ADP + phosphate. It carries out the reaction GTP + succinate + CoA = succinyl-CoA + GDP + phosphate. It functions in the pathway carbohydrate metabolism; tricarboxylic acid cycle; succinate from succinyl-CoA (ligase route): step 1/1. Succinyl-CoA synthetase functions in the citric acid cycle (TCA), coupling the hydrolysis of succinyl-CoA to the synthesis of either ATP or GTP and thus represents the only step of substrate-level phosphorylation in the TCA. The beta subunit provides nucleotide specificity of the enzyme and binds the substrate succinate, while the binding sites for coenzyme A and phosphate are found in the alpha subunit. The sequence is that of Succinate--CoA ligase [ADP-forming] subunit beta from Acidothermus cellulolyticus (strain ATCC 43068 / DSM 8971 / 11B).